The sequence spans 340 residues: 4-hydroxy-2-oxovalerate aldolase (340 aa).

In terms of domain architecture, Pyruvate carboxyltransferase spans 4–255 (VVIHDPTLRD…ATGIDLYALL (252 aa)). 12–13 (RD) contacts substrate. Mn(2+) is bound at residue aspartate 13. Catalysis depends on histidine 16, which acts as the Proton acceptor. Positions 166 and 194 each coordinate substrate. Mn(2+)-binding residues include histidine 194 and histidine 196.

Belongs to the 4-hydroxy-2-oxovalerate aldolase family.

The enzyme catalyses (S)-4-hydroxy-2-oxopentanoate = acetaldehyde + pyruvate. This Streptomyces griseus subsp. griseus (strain JCM 4626 / CBS 651.72 / NBRC 13350 / KCC S-0626 / ISP 5235) protein is 4-hydroxy-2-oxovalerate aldolase.